We begin with the raw amino-acid sequence, 278 residues long: Small ribosomal subunit biogenesis GTPase RsgA (278 aa).

One can recognise a CP-type G domain in the interval 62 to 218; sequence KNELTRPRVA…ICDTPGFNVI (157 aa). GTP-binding positions include 112 to 115 and 162 to 170; these read TKTD and GQSGVGKSS. Positions 241, 246, 248, and 254 each coordinate Zn(2+).

Belongs to the TRAFAC class YlqF/YawG GTPase family. RsgA subfamily. In terms of assembly, monomer. Associates with 30S ribosomal subunit, binds 16S rRNA. It depends on Zn(2+) as a cofactor.

The protein resides in the cytoplasm. Functionally, one of several proteins that assist in the late maturation steps of the functional core of the 30S ribosomal subunit. Helps release RbfA from mature subunits. May play a role in the assembly of ribosomal proteins into the subunit. Circularly permuted GTPase that catalyzes slow GTP hydrolysis, GTPase activity is stimulated by the 30S ribosomal subunit. The chain is Small ribosomal subunit biogenesis GTPase RsgA from Mycoplasma genitalium (strain ATCC 33530 / DSM 19775 / NCTC 10195 / G37) (Mycoplasmoides genitalium).